We begin with the raw amino-acid sequence, 146 residues long: NADH-quinone oxidoreductase subunit A (146 aa).

3 consecutive transmembrane segments (helical) span residues 16 to 36 (FAIF…GGWF), 68 to 88 (FYLV…LFAW), and 98 to 118 (VGFV…VYLV).

The protein belongs to the complex I subunit 3 family. NDH-1 is composed of 13 different subunits. Subunits NuoA, H, J, K, L, M, N constitute the membrane sector of the complex.

It localises to the cell inner membrane. It carries out the reaction a quinone + NADH + 5 H(+)(in) = a quinol + NAD(+) + 4 H(+)(out). Its function is as follows. NDH-1 shuttles electrons from NADH, via FMN and iron-sulfur (Fe-S) centers, to quinones in the respiratory chain. The immediate electron acceptor for the enzyme in this species is believed to be ubiquinone. Couples the redox reaction to proton translocation (for every two electrons transferred, four hydrogen ions are translocated across the cytoplasmic membrane), and thus conserves the redox energy in a proton gradient. This Enterobacter sp. (strain 638) protein is NADH-quinone oxidoreductase subunit A.